The sequence spans 97 residues: Cysteine-rich and transmembrane domain-containing protein 1 (97 aa).

The span at 1 to 40 (MNQENPPPYPGPGPTAPYPPYPPQPMGPGPMGGPYPPPQG) shows a compositional bias: pro residues. Positions 1–61 (MNQENPPPYP…QGGPQEPPKT (61 aa)) are disordered. Positions 41 to 50 (YPYQGYPQYG) are enriched in low complexity. Residues 74-91 (LGPSTCLTACWTALCCCC) traverse the membrane as a helical segment.

The protein belongs to the CYSTM1 family.

It localises to the membrane. This chain is Cysteine-rich and transmembrane domain-containing protein 1 (CYSTM1), found in Homo sapiens (Human).